Here is a 129-residue protein sequence, read N- to C-terminus: Lysozyme C (129 aa).

The C-type lysozyme domain occupies 1-129 (KVYGRCELAA…VSVWTRGCRL (129 aa)). Cystine bridges form between cysteine 6-cysteine 127, cysteine 30-cysteine 115, cysteine 64-cysteine 80, and cysteine 76-cysteine 94. Residues glutamate 35 and aspartate 52 contribute to the active site.

It belongs to the glycosyl hydrolase 22 family. As to quaternary structure, monomer.

It localises to the secreted. The enzyme catalyses Hydrolysis of (1-&gt;4)-beta-linkages between N-acetylmuramic acid and N-acetyl-D-glucosamine residues in a peptidoglycan and between N-acetyl-D-glucosamine residues in chitodextrins.. Functionally, lysozymes have primarily a bacteriolytic function; those in tissues and body fluids are associated with the monocyte-macrophage system and enhance the activity of immunoagents. The polypeptide is Lysozyme C (LYZ) (Lophura leucomelanos (Kalij pheasant)).